Consider the following 1002-residue polypeptide: UPF0182 protein Mvan_1814 (1002 aa).

A run of 7 helical transmembrane segments spans residues 16–36, 61–81, 112–132, 174–194, 209–229, 258–278, and 286–306; these read VMIA…RLVD, LLLF…AMAL, LVGI…AQNY, FAAT…FGGI, IQLI…YWLD, KLIL…AIVL, and IGVV…PLVV. The tract at residues 891-958 is disordered; the sequence is LFGPGADATA…TGPTQLSAGK (68 aa). Residues 893-923 are compositionally biased toward low complexity; it reads GPGADATATGPAATEPPAGQAPQPQGNNQPP. Pro residues predominate over residues 937 to 950; the sequence is PQQPEVPVAVPPTG.

The protein belongs to the UPF0182 family.

It localises to the cell membrane. The protein is UPF0182 protein Mvan_1814 of Mycolicibacterium vanbaalenii (strain DSM 7251 / JCM 13017 / BCRC 16820 / KCTC 9966 / NRRL B-24157 / PYR-1) (Mycobacterium vanbaalenii).